Consider the following 205-residue polypeptide: N-(5'-phosphoribosyl)anthranilate isomerase (205 aa).

Belongs to the TrpF family.

It carries out the reaction N-(5-phospho-beta-D-ribosyl)anthranilate = 1-(2-carboxyphenylamino)-1-deoxy-D-ribulose 5-phosphate. It participates in amino-acid biosynthesis; L-tryptophan biosynthesis; L-tryptophan from chorismate: step 3/5. The protein is N-(5'-phosphoribosyl)anthranilate isomerase of Marinomonas sp. (strain MWYL1).